The chain runs to 314 residues: DNA-directed RNA polymerase subunit alpha (314 aa).

An alpha N-terminal domain (alpha-NTD) region spans residues 1–228 (MIEIEKPKIE…EHLNIFVGLT (228 aa)). Residues 245–314 (KEKVLEMTIE…ELGLGLRKDD (70 aa)) form an alpha C-terminal domain (alpha-CTD) region.

This sequence belongs to the RNA polymerase alpha chain family. Homodimer. The RNAP catalytic core consists of 2 alpha, 1 beta, 1 beta' and 1 omega subunit. When a sigma factor is associated with the core the holoenzyme is formed, which can initiate transcription.

It catalyses the reaction RNA(n) + a ribonucleoside 5'-triphosphate = RNA(n+1) + diphosphate. Functionally, DNA-dependent RNA polymerase catalyzes the transcription of DNA into RNA using the four ribonucleoside triphosphates as substrates. The polypeptide is DNA-directed RNA polymerase subunit alpha (Bacillus licheniformis (strain ATCC 14580 / DSM 13 / JCM 2505 / CCUG 7422 / NBRC 12200 / NCIMB 9375 / NCTC 10341 / NRRL NRS-1264 / Gibson 46)).